A 682-amino-acid polypeptide reads, in one-letter code: Kinesin-like protein KIF2A (682 aa).

The interval 1-192 (MVTSLNEDSE…LDYRPLTTSD (192 aa)) is globular. Positions 39-129 (LAPDEEIDPG…GKKDFGLASR (91 aa)) are disordered. The span at 99 to 115 (IEQSASRQQNGSVSDIS) shows a compositional bias: polar residues. The 331-residue stretch at 198–528 (RICVCVRKRP…LRYANRVKEL (331 aa)) folds into the Kinesin motor domain. Residue 288–295 (GQTGSGKT) participates in ATP binding. Residues 638-673 (QLEAILEKKIDILTELRDKVKSFRAALQEEEHASKQ) are a coiled coil.

The protein belongs to the TRAFAC class myosin-kinesin ATPase superfamily. Kinesin family. MCAK/KIF2 subfamily. In terms of assembly, interacts with aurka and plk1. Post-translationally, phosphorylation by plk1 promotes location at spindle microtubules and spindle poles, and enhances its microtubule depolymerization activity. In terms of processing, phosphorylation by AURKA interferes with location at spindle microtubules and spindle poles, and inhibits its microtubule depolymerization activity.

Its subcellular location is the cytoplasm. It localises to the cytoskeleton. The protein resides in the microtubule organizing center. It is found in the centrosome. The protein localises to the spindle pole. Its subcellular location is the spindle. Its function is as follows. Plus end-directed microtubule-dependent motor. May regulate microtubule dynamics during axonal growth. Required for normal progression through mitosis. Required for normal congress of chromosomes at the metaphase plate. Required for normal spindle dynamics during mitosis. Promotes spindle turnover. Implicated in formation of bipolar mitotic spindles Has microtubule depolymerization activity. This chain is Kinesin-like protein KIF2A (kif2a), found in Xenopus laevis (African clawed frog).